A 501-amino-acid polypeptide reads, in one-letter code: Aromatase 3 (501 aa).

Cys-435 serves as a coordination point for heme.

It belongs to the cytochrome P450 family. The cofactor is heme. Ovary.

The protein localises to the membrane. The catalysed reaction is testosterone + 3 reduced [NADPH--hemoprotein reductase] + 3 O2 = 17beta-estradiol + formate + 3 oxidized [NADPH--hemoprotein reductase] + 4 H2O + 4 H(+). The enzyme catalyses androst-4-ene-3,17-dione + 3 reduced [NADPH--hemoprotein reductase] + 3 O2 = estrone + formate + 3 oxidized [NADPH--hemoprotein reductase] + 4 H2O + 4 H(+). Its function is as follows. Catalyzes the formation of aromatic C18 estrogens from C19 androgens. This is Aromatase 3 (CYP19A3) from Sus scrofa (Pig).